The primary structure comprises 195 residues: Protein GrpE (195 aa).

This sequence belongs to the GrpE family. As to quaternary structure, homodimer.

Its subcellular location is the cytoplasm. In terms of biological role, participates actively in the response to hyperosmotic and heat shock by preventing the aggregation of stress-denatured proteins, in association with DnaK and GrpE. It is the nucleotide exchange factor for DnaK and may function as a thermosensor. Unfolded proteins bind initially to DnaJ; upon interaction with the DnaJ-bound protein, DnaK hydrolyzes its bound ATP, resulting in the formation of a stable complex. GrpE releases ADP from DnaK; ATP binding to DnaK triggers the release of the substrate protein, thus completing the reaction cycle. Several rounds of ATP-dependent interactions between DnaJ, DnaK and GrpE are required for fully efficient folding. The sequence is that of Protein GrpE from Blochmanniella floridana.